A 39-amino-acid polypeptide reads, in one-letter code: MKVRPSVKKMCEHCKIVKRNGRVMVICSANPKHKQRQGK.

Belongs to the bacterial ribosomal protein bL36 family.

The chain is Large ribosomal subunit protein bL36 from Limosilactobacillus reuteri (strain DSM 20016) (Lactobacillus reuteri).